The sequence spans 486 residues: Vacuolar-processing enzyme beta-isozyme (486 aa).

The signal sequence occupies residues M1–A21. The active site involves H169. C211 acts as the Nucleophile in catalysis. C244 and C258 are disulfide-bonded. N309 carries an N-linked (GlcNAc...) asparagine glycan. 2 cysteine pairs are disulfide-bonded: C420–C450 and C432–C467.

Belongs to the peptidase C13 family. Auto-catalytic activation. Seed specific. Also expressed in the flowers and buds.

Its subcellular location is the vacuole. The protein localises to the protein storage vacuole. It catalyses the reaction Hydrolysis of proteins and small molecule substrates at -Asn-|-Xaa- bonds.. Asparagine-specific endopeptidase involved in the processing of vacuolar seed protein precursors into the mature forms. Probably involved in post-translational proteolysis of seed storage proteins in the protein storage vacuole of developing seeds. The protein is Vacuolar-processing enzyme beta-isozyme of Arabidopsis thaliana (Mouse-ear cress).